A 343-amino-acid polypeptide reads, in one-letter code: Outer envelope pore protein 37, chloroplastic (343 aa).

Polar residues-rich tracts occupy residues 1-11 (MADPSSQNPNL) and 23-43 (THQIQSGTSELSPPSRPPCST). The tract at residues 1–43 (MADPSSQNPNLATPPPPSSPSPTHQIQSGTSELSPPSRPPCST) is disordered. Residues 1–73 (MADPSSQNPN…DSLLFLNKVS (73 aa)) constitute a chloroplast transit peptide. The Cytoplasmic segment spans residues 74 to 76 (CKL). The chain crosses the membrane as a beta stranded span at residues 77–86 (FDNLAKLKLS). Over 87–103 (FQNNSQREISQPQVSFT) the chain is Chloroplast intermembrane. Residues 104-113 (SKHVSVLYDV) traverse the membrane as a beta stranded segment. Residues 114–129 (EEKNTFIKSTLDVHPR) lie on the Cytoplasmic side of the membrane. A beta stranded transmembrane segment spans residues 130-137 (LQLRALHN). The Chloroplast intermembrane segment spans residues 138–154 (VKAQQGEVAMEANLTEP). The beta stranded transmembrane segment at 155 to 164 (GYSLELSSPV) threads the bilayer. At 165 to 169 (PIGYP) the chain is on the cytoplasmic side. A beta stranded membrane pass occupies residues 170–178 (RATLKFPLG). Topologically, residues 179 to 219 (EISLQEKDEEEEEKQKRTLSVNGILKRQVMNGVCTALYTDE) are chloroplast intermembrane. A beta stranded membrane pass occupies residues 220–228 (ELRLRYAYK). The Cytoplasmic segment spans residues 229–230 (DD). Residues 231-240 (ALSFIPSISL) traverse the membrane as a beta stranded segment. Position 241 (proline 241) is a topological domain, chloroplast intermembrane. A beta stranded membrane pass occupies residues 242-250 (SNAASFAFK). The Cytoplasmic segment spans residues 251–257 (RRFSPSD). A beta stranded transmembrane segment spans residues 258–267 (KLSYWYNFDS). The Chloroplast intermembrane segment spans residues 268 to 269 (NM). The beta stranded transmembrane segment at 270–279 (WSAVYKRTYG) threads the bilayer. At 280–286 (KDYKLKA) the chain is on the cytoplasmic side. A beta stranded transmembrane segment spans residues 287–296 (GYDSDVRLGW). Residues 297–316 (ASLWVGDEAGKVKTTPMKMK) are Chloroplast intermembrane-facing. A beta stranded transmembrane segment spans residues 317-326 (VQFMLQVPQD). Over 327–343 (DIKSSVLMFRVKKRWDI) the chain is Cytoplasmic.

Belongs to the plastid outer envelope porin OEP37 (TC 1.B.47) family. Forms an hourglass-shaped multimeric complex. Ubiquitously expressed at low levels. Mostly present in cotyledons, and accumulates in seedlings and embryos.

It is found in the plastid. Its subcellular location is the chloroplast outer membrane. Its function is as follows. Voltage-dependent peptide-sensitive high conductance rectifying cation channel with a strong affinity for TIC32 that is imported into the chloroplast. Conductance is pH-dependent decreasing with decreasing pH values. This chain is Outer envelope pore protein 37, chloroplastic (OEP37), found in Arabidopsis thaliana (Mouse-ear cress).